The sequence spans 81 residues: UPF0434 protein msl4429 (81 aa).

It belongs to the UPF0434 family.

This Mesorhizobium japonicum (strain LMG 29417 / CECT 9101 / MAFF 303099) (Mesorhizobium loti (strain MAFF 303099)) protein is UPF0434 protein msl4429.